The sequence spans 102 residues: UPF0147 protein MTH_1407 (102 aa).

The protein belongs to the UPF0147 family.

The polypeptide is UPF0147 protein MTH_1407 (Methanothermobacter thermautotrophicus (strain ATCC 29096 / DSM 1053 / JCM 10044 / NBRC 100330 / Delta H) (Methanobacterium thermoautotrophicum)).